The sequence spans 237 residues: Proteasome subunit beta type-1 (237 aa).

The protein belongs to the peptidase T1B family. In terms of assembly, the 26S proteasome consists of a 20S proteasome core and two 19S regulatory subunits. The 20S proteasome core is a barrel-shaped complex made of 28 subunits that are arranged in four stacked rings. The two outer rings are each formed by seven alpha subunits, and the two inner rings are formed by seven beta subunits. The proteolytic activity is exerted by three beta-subunits psmb5, psmb6 and psmb7.

The protein resides in the cytoplasm. It localises to the nucleus. Non-catalytic component of the 20S core proteasome complex involved in the proteolytic degradation of most intracellular proteins. This complex plays numerous essential roles within the cell by associating with different regulatory particles. Associated with two 19S regulatory particles, forms the 26S proteasome and thus participates in the ATP-dependent degradation of ubiquitinated proteins. The 26S proteasome plays a key role in the maintenance of protein homeostasis by removing misfolded or damaged proteins that could impair cellular functions, and by removing proteins whose functions are no longer required. Associated with the PA200 or PA28, the 20S proteasome mediates ubiquitin-independent protein degradation. This chain is Proteasome subunit beta type-1, found in Danio rerio (Zebrafish).